A 166-amino-acid chain; its full sequence is MAHIEKQAGELQEKLIAVNRVSKTVKGGRIFSFTALTVVGDGNGRVGFGYGKAREVPAAIQKAMEKARRNMKTVALNSGTLYHPVKGAHTGSRVFMQPAHEGTGIIAGGAMRAVLEVAGVRNVLAKTYGSTNPINVVRATLDALDSMKSPEMVAAKRGKSVEEILG.

Positions 11–74 (LQEKLIAVNR…EKARRNMKTV (64 aa)) constitute an S5 DRBM domain.

It belongs to the universal ribosomal protein uS5 family. In terms of assembly, part of the 30S ribosomal subunit. Contacts proteins S4 and S8.

With S4 and S12 plays an important role in translational accuracy. Its function is as follows. Located at the back of the 30S subunit body where it stabilizes the conformation of the head with respect to the body. The sequence is that of Small ribosomal subunit protein uS5 from Photorhabdus laumondii subsp. laumondii (strain DSM 15139 / CIP 105565 / TT01) (Photorhabdus luminescens subsp. laumondii).